The following is a 362-amino-acid chain: Manganese peroxidase 3 (362 aa).

The signal sequence occupies residues 1–18 (MAFKQLLTAISIVSVANA). A propeptide spanning residues 19 to 23 (ALTRR) is cleaved from the precursor. 4 cysteine pairs are disulfide-bonded: Cys-26–Cys-39, Cys-38–Cys-309, Cys-58–Cys-144, and Cys-273–Cys-338. Residues Glu-60 and Glu-64 each coordinate Mn(2+). The active-site Proton acceptor is His-71. Residues Asp-72, Gly-90, Asp-92, and Ser-94 each coordinate Ca(2+). The N-linked (GlcNAc...) asparagine glycan is linked to Asn-126. His-200 lines the heme b pocket. Thr-201 contacts Ca(2+). Asp-206 provides a ligand contact to Mn(2+). 4 residues coordinate Ca(2+): Asp-218, Thr-220, Ile-223, and Asp-225. The interval 341–362 (TPFPSLSADPGPATSVAPVPPS) is disordered.

This sequence belongs to the peroxidase family. Ligninase subfamily. Requires heme b as cofactor. Ca(2+) is required as a cofactor.

Its subcellular location is the secreted. It carries out the reaction 2 Mn(2+) + H2O2 + 2 H(+) = 2 Mn(3+) + 2 H2O. In terms of biological role, catalyzes the oxidation of Mn(2+) to Mn(3+). The latter, acting as a diffusible redox mediator, is capable of oxidizing a variety of lignin compounds. This isozyme is also able to oxidize phenols and amines in the absence of Mn(2+), similar to versatile peroxidases. The sequence is that of Manganese peroxidase 3 (mnp3) from Phlebia radiata (White-rot fungus).